Reading from the N-terminus, the 349-residue chain is Small ribosomal subunit biogenesis GTPase RsgA (349 aa).

Basic residues predominate over residues 1–11; it reads MSKKKLSKGQQ. Residues 1–29 are disordered; it reads MSKKKLSKGQQRRVSANHQRRLKKTESKV. The CP-type G domain maps to 102–272; the sequence is HSVLTRPDYY…VIDSPGVREF (171 aa). GTP-binding positions include 158–161 and 212–220; these read NKID and GQSGVGKSS. 4 residues coordinate Zn(2+): Cys296, Cys301, His303, and Cys309.

The protein belongs to the TRAFAC class YlqF/YawG GTPase family. RsgA subfamily. As to quaternary structure, monomer. Associates with 30S ribosomal subunit, binds 16S rRNA. The cofactor is Zn(2+).

Its subcellular location is the cytoplasm. Functionally, one of several proteins that assist in the late maturation steps of the functional core of the 30S ribosomal subunit. Helps release RbfA from mature subunits. May play a role in the assembly of ribosomal proteins into the subunit. Circularly permuted GTPase that catalyzes slow GTP hydrolysis, GTPase activity is stimulated by the 30S ribosomal subunit. The polypeptide is Small ribosomal subunit biogenesis GTPase RsgA (Pectobacterium atrosepticum (strain SCRI 1043 / ATCC BAA-672) (Erwinia carotovora subsp. atroseptica)).